We begin with the raw amino-acid sequence, 337 residues long: Putative olfactory receptor 1F12P (337 aa).

Over 1–25 (MEGKNQTNISEFLLLGFSSWQQQQV) the chain is Extracellular. N5 and N8 each carry an N-linked (GlcNAc...) asparagine glycan. Residues 26-49 (LLFALFLCLYLTGLFGNLLILLAI) form a helical membrane-spanning segment. The Cytoplasmic segment spans residues 50 to 57 (GSDHCLHT). Residues 58 to 79 (PMYFFLANLSLVDLCLPSATVP) form a helical membrane-spanning segment. Over 80-100 (KMLLNIQTQTQTISYPGCLAQ) the chain is Extracellular. C97 and C189 are oxidised to a cystine. Residues 101-120 (MYFCMMFANMDNFLLTVMAY) traverse the membrane as a helical segment. Residues 121-139 (DRYVAICHPLHYSTIMALR) are Cytoplasmic-facing. A helical membrane pass occupies residues 140–158 (LCASLVAAPWVIAILNPLL). The Extracellular segment spans residues 159–196 (HTLMMAHLHFCSDNVIHHFFCDINSLLPLSCSDTSLNQ). A helical transmembrane segment spans residues 197–219 (LSVLATVGLIFVVPSVCILVSYI). Residues 220-236 (LIVSAVMKVPSAQGKLK) are Cytoplasmic-facing. A helical transmembrane segment spans residues 237-259 (AFSTCGSHLALVILFYGAITGVY). The Extracellular portion of the chain corresponds to 260–272 (MSPLSNHSTEKDS). A glycan (N-linked (GlcNAc...) asparagine) is linked at N265. Residues 273-292 (AASVIFMVVAPVLNPFIYSL) traverse the membrane as a helical segment. Residues 293–337 (RNNELKGTLKKTLSRPGAVAHACNPSTLGGRGGWIMRSGDRDHPG) are Cytoplasmic-facing.

This sequence belongs to the G-protein coupled receptor 1 family.

It localises to the cell membrane. In terms of biological role, odorant receptor. The polypeptide is Putative olfactory receptor 1F12P (Homo sapiens (Human)).